Here is a 116-residue protein sequence, read N- to C-terminus: Putative iron-sulfur cluster insertion protein ErpA (116 aa).

3 residues coordinate iron-sulfur cluster: C44, C108, and C110.

It belongs to the HesB/IscA family. As to quaternary structure, homodimer. Iron-sulfur cluster serves as cofactor.

In terms of biological role, required for insertion of 4Fe-4S clusters. The polypeptide is Putative iron-sulfur cluster insertion protein ErpA (Herminiimonas arsenicoxydans).